We begin with the raw amino-acid sequence, 269 residues long: Energy-coupling factor transporter ATP-binding protein EcfA1 (269 aa).

One can recognise an ABC transporter domain in the interval 8 to 242 (IVFKNVSFQY…AEELTRIGLD (235 aa)). Position 42-49 (42-49 (GHNGSGKS)) interacts with ATP.

The protein belongs to the ABC transporter superfamily. Energy-coupling factor EcfA family. Forms a stable energy-coupling factor (ECF) transporter complex composed of 2 membrane-embedded substrate-binding proteins (S component), 2 ATP-binding proteins (A component) and 2 transmembrane proteins (T component).

The protein localises to the cell membrane. In terms of biological role, ATP-binding (A) component of a common energy-coupling factor (ECF) ABC-transporter complex. Unlike classic ABC transporters this ECF transporter provides the energy necessary to transport a number of different substrates. This chain is Energy-coupling factor transporter ATP-binding protein EcfA1, found in Staphylococcus aureus (strain Mu50 / ATCC 700699).